The primary structure comprises 425 residues: Glutamyl-tRNA reductase (425 aa).

Residues 49–52 (TCNR), serine 107, 112–114 (EPQ), and glutamine 118 contribute to the substrate site. Residue cysteine 50 is the Nucleophile of the active site. 187-192 (GAGETI) serves as a coordination point for NADP(+).

Belongs to the glutamyl-tRNA reductase family. Homodimer.

It catalyses the reaction (S)-4-amino-5-oxopentanoate + tRNA(Glu) + NADP(+) = L-glutamyl-tRNA(Glu) + NADPH + H(+). It participates in porphyrin-containing compound metabolism; protoporphyrin-IX biosynthesis; 5-aminolevulinate from L-glutamyl-tRNA(Glu): step 1/2. Functionally, catalyzes the NADPH-dependent reduction of glutamyl-tRNA(Glu) to glutamate 1-semialdehyde (GSA). In Pseudomonas putida (strain ATCC 47054 / DSM 6125 / CFBP 8728 / NCIMB 11950 / KT2440), this protein is Glutamyl-tRNA reductase.